The primary structure comprises 428 residues: Ribosomal RNA small subunit methyltransferase B (428 aa).

S-adenosyl-L-methionine is bound by residues 253–259 (CAAPGGK), Asp276, Asp302, and Asp321. The active-site Nucleophile is the Cys374.

The protein belongs to the class I-like SAM-binding methyltransferase superfamily. RsmB/NOP family.

The protein resides in the cytoplasm. The enzyme catalyses cytidine(967) in 16S rRNA + S-adenosyl-L-methionine = 5-methylcytidine(967) in 16S rRNA + S-adenosyl-L-homocysteine + H(+). In terms of biological role, specifically methylates the cytosine at position 967 (m5C967) of 16S rRNA. This is Ribosomal RNA small subunit methyltransferase B from Enterobacter sp. (strain 638).